The chain runs to 55 residues: MNSTKVVNVIIAIFLPPVAVFLARGWGVECIVDLLLTIFFFFPGMLYALYIVLTS.

Helical transmembrane passes span 6-26 (VVNV…ARGW) and 34-54 (LLLT…IVLT).

This sequence belongs to the UPF0057 (PMP3) family.

It is found in the cell membrane. Functionally, plays a role in the regulation of membrane potential. Could mediate a proton leak. The sequence is that of Plasma membrane proteolipid 3 (PMP3) from Eremothecium gossypii (strain ATCC 10895 / CBS 109.51 / FGSC 9923 / NRRL Y-1056) (Yeast).